The following is a 214-amino-acid chain: MDLHFENIRREYDKRSLSASDLTPTPFDLVTRWLQDAVEAKTYEPTAVIVGTATPDGHPSTRTVLLKEFLNNEFIFYSNYESRKGQQMAANPHVCLTFLWHELERQIHVEGDVRILEPELSDAYFATRPYKSRVGARISPQSRPIPGRSFIVQEFMKESLKYAGRTVPRPDTWGGFAVKPVRIEFWQGRESRLHDRFLYELRPDASWSVHRLAP.

Substrate contacts are provided by residues 9–12 (RREY) and K67. FMN contacts are provided by residues 62-67 (RTVLLK), 77-78 (YS), R83, K84, and Q106. Y124, R128, and S132 together coordinate substrate. FMN contacts are provided by residues 141–142 (QS) and W186. 192–194 (RLH) contributes to the substrate binding site. R196 contacts FMN.

The protein belongs to the pyridoxamine 5'-phosphate oxidase family. As to quaternary structure, homodimer. Requires FMN as cofactor.

The catalysed reaction is pyridoxamine 5'-phosphate + O2 + H2O = pyridoxal 5'-phosphate + H2O2 + NH4(+). It carries out the reaction pyridoxine 5'-phosphate + O2 = pyridoxal 5'-phosphate + H2O2. The protein operates within cofactor metabolism; pyridoxal 5'-phosphate salvage; pyridoxal 5'-phosphate from pyridoxamine 5'-phosphate: step 1/1. Its pathway is cofactor metabolism; pyridoxal 5'-phosphate salvage; pyridoxal 5'-phosphate from pyridoxine 5'-phosphate: step 1/1. Its function is as follows. Catalyzes the oxidation of either pyridoxine 5'-phosphate (PNP) or pyridoxamine 5'-phosphate (PMP) into pyridoxal 5'-phosphate (PLP). This is Pyridoxine/pyridoxamine 5'-phosphate oxidase from Porphyromonas gingivalis (strain ATCC 33277 / DSM 20709 / CIP 103683 / JCM 12257 / NCTC 11834 / 2561).